The primary structure comprises 747 residues: Putative T-box protein 31 (747 aa).

The segment at residues 33–199 (QMLTKRKKTN…AGPAAKKTPD (167 aa)) is a DNA-binding region (T-box). Disordered stretches follow at residues 268–289 (SLSS…DFDD) and 332–364 (SINN…VRDK). Residues 332–358 (SINNPGYLSTASSPAALNQDSSASEKS) show a composition bias toward polar residues.

It localises to the nucleus. The chain is Putative T-box protein 31 (tbx-31) from Caenorhabditis elegans.